A 622-amino-acid chain; its full sequence is MSTDNKQSLPAITLAAIGVVYGDIGTSPLYTLRECLSGQFGFGVERDAVFGFLSLIFWLLIFVVSIKYLTFVMRADNAGEGGILTLMSLAGRNTSARTTSMLVIMGLIGGSFFYGEVVITPAISVMSAIEGLEIVAPQLDTWIVPLSIIVLTLLFMIQKHGTAMVGQLFAPIMLTWFLILAGLGLRSIIANPEVLHALNPMWAVHFFLEYKTVSFIALGAVVLSITGVEALYADMGHFGKFPIRLAWFTVVLPSLTLNYFGQGALLLKNPEAIKNPFFLLAPDWALIPLLIIAALATVIASQAVISGVFSLTRQAVRLGYLSPMRIIHTSEMESGQIYIPFVNWMLYVAVVIVIVSFEHSSNLAAAYGIAVTGTMVLTSILSTTVARQNWHWNKYFVALILIAFLCVDIPLFTANLDKLLSGGWLPLSLGTVMFIVMTTWKSERFRLLRRMHEHGNSLEAMIASLEKSPPVRVPGTAVYMSRAINVIPFALMHNLKHNKVLHERVILLTLRTEDAPYVHNVRRVQIEQLSPTFWRVVASYGWRETPNVEEVFHRCGLEGLSCRMMETSFFMSHESLILGKRPWYLRLRGKLYLLLQRNALRAPDQFEIPPNRVIELGTQVEI.

12 helical membrane passes run 9–29, 49–69, 103–123, 137–157, 165–185, 213–233, 247–267, 276–296, 337–357, 363–383, 396–416, and 419–439; these read LPAI…TSPL, VFGF…IKYL, VIMG…TPAI, PQLD…LFMI, VGQL…GLGL, VSFI…ALYA, WFTV…ALLL, PFFL…AALA, IYIP…IVSF, LAAA…ILST, FVAL…TANL, and LLSG…VMTT.

The protein belongs to the HAK/KUP transporter (TC 2.A.72) family.

Its subcellular location is the cell inner membrane. The enzyme catalyses K(+)(in) + H(+)(in) = K(+)(out) + H(+)(out). Functionally, responsible for the low-affinity transport of potassium into the cell. Likely operates as a K(+):H(+) symporter. This chain is Low affinity potassium transport system protein Kup, found in Escherichia coli O6:K15:H31 (strain 536 / UPEC).